The following is a 115-amino-acid chain: U3-lycotoxin-Ls1u (115 aa).

Residues M1 to A20 form the signal peptide. The propeptide occupies E21–R44. 3 disulfide bridges follow: C48–C63, C55–C72, and C62–C87.

It belongs to the neurotoxin 19 (CSTX) family. 01 subfamily. As to expression, expressed by the venom gland.

The protein localises to the secreted. This is U3-lycotoxin-Ls1u from Lycosa singoriensis (Wolf spider).